A 171-amino-acid chain; its full sequence is UPF0312 protein MW2606 (171 aa).

Belongs to the UPF0312 family.

This is UPF0312 protein MW2606 from Staphylococcus aureus (strain MW2).